The following is a 245-amino-acid chain: Pyridoxine 5'-phosphate synthase (245 aa).

The 3-amino-2-oxopropyl phosphate site is built by Asn-8 and Arg-19. His-44 (proton acceptor) is an active-site residue. 1-deoxy-D-xylulose 5-phosphate-binding residues include Arg-46 and His-51. The Proton acceptor role is filled by Glu-76. Thr-106 provides a ligand contact to 1-deoxy-D-xylulose 5-phosphate. His-198 serves as the catalytic Proton donor. 3-amino-2-oxopropyl phosphate-binding positions include Asp-199 and 221–222; that span reads GH.

Belongs to the PNP synthase family. In terms of assembly, homooctamer; tetramer of dimers.

Its subcellular location is the cytoplasm. The catalysed reaction is 3-amino-2-oxopropyl phosphate + 1-deoxy-D-xylulose 5-phosphate = pyridoxine 5'-phosphate + phosphate + 2 H2O + H(+). Its pathway is cofactor biosynthesis; pyridoxine 5'-phosphate biosynthesis; pyridoxine 5'-phosphate from D-erythrose 4-phosphate: step 5/5. Catalyzes the complicated ring closure reaction between the two acyclic compounds 1-deoxy-D-xylulose-5-phosphate (DXP) and 3-amino-2-oxopropyl phosphate (1-amino-acetone-3-phosphate or AAP) to form pyridoxine 5'-phosphate (PNP) and inorganic phosphate. In Brucella anthropi (strain ATCC 49188 / DSM 6882 / CCUG 24695 / JCM 21032 / LMG 3331 / NBRC 15819 / NCTC 12168 / Alc 37) (Ochrobactrum anthropi), this protein is Pyridoxine 5'-phosphate synthase.